The following is a 336-amino-acid chain: 3-isopropylmalate dehydrogenase (336 aa).

The substrate site is built by Arg-87, Arg-97, Arg-121, and Asp-211. Mg(2+) contacts are provided by Asp-211, Asp-235, and Asp-239. Residue 271-283 (GSAPDIAGQGIAD) coordinates NAD(+).

This sequence belongs to the isocitrate and isopropylmalate dehydrogenases family. LeuB type 2 subfamily. Homodimer. Requires Mg(2+) as cofactor. It depends on Mn(2+) as a cofactor.

Its subcellular location is the cytoplasm. It catalyses the reaction (2R,3S)-3-isopropylmalate + NAD(+) = 4-methyl-2-oxopentanoate + CO2 + NADH. It functions in the pathway amino-acid biosynthesis; L-leucine biosynthesis; L-leucine from 3-methyl-2-oxobutanoate: step 3/4. Its function is as follows. Catalyzes the oxidation of 3-carboxy-2-hydroxy-4-methylpentanoate (3-isopropylmalate) to 3-carboxy-4-methyl-2-oxopentanoate. The product decarboxylates to 4-methyl-2 oxopentanoate. This Mycobacterium bovis (strain ATCC BAA-935 / AF2122/97) protein is 3-isopropylmalate dehydrogenase.